A 234-amino-acid chain; its full sequence is Small ribosomal subunit protein uS3 (234 aa).

The KH type-2 domain maps to 39 to 107 (IRKFLKKELY…EVSINIKEVK (69 aa)).

The protein belongs to the universal ribosomal protein uS3 family. As to quaternary structure, part of the 30S ribosomal subunit. Forms a tight complex with proteins S10 and S14.

In terms of biological role, binds the lower part of the 30S subunit head. Binds mRNA in the 70S ribosome, positioning it for translation. The protein is Small ribosomal subunit protein uS3 of Helicobacter pylori (strain G27).